The sequence spans 325 residues: Glycine--tRNA ligase alpha subunit (325 aa).

It belongs to the class-II aminoacyl-tRNA synthetase family. As to quaternary structure, tetramer of two alpha and two beta subunits.

The protein localises to the cytoplasm. It catalyses the reaction tRNA(Gly) + glycine + ATP = glycyl-tRNA(Gly) + AMP + diphosphate. In Ralstonia nicotianae (strain ATCC BAA-1114 / GMI1000) (Ralstonia solanacearum), this protein is Glycine--tRNA ligase alpha subunit.